A 145-amino-acid chain; its full sequence is Angiogenin (145 aa).

Positions 1–24 (MAISPGPLFLIFVLGLVVIPPTLA) are cleaved as a signal peptide. Gln25 carries the post-translational modification Pyrrolidone carboxylic acid. His37 acts as the Proton acceptor in catalysis. 2 residues coordinate tRNA: Arg45 and Asp46. 3 cysteine pairs are disulfide-bonded: Cys50–Cys104, Cys63–Cys115, and Cys81–Cys130. The Nucleolar localization signal motif lies at 55 to 59 (KRRSL). TRNA contacts are provided by Cys104 and Val126. Catalysis depends on His137, which acts as the Proton donor.

The protein belongs to the pancreatic ribonuclease family. Homodimer. Interacts with RNH1; inhibiting ANG ribonuclease activity. Interacts with PCNA.

Its subcellular location is the secreted. The protein resides in the nucleus. It is found in the nucleolus. The protein localises to the cytoplasm. It localises to the stress granule. With respect to regulation, has weak tRNA ribonuclease activity by itself due to partial autoinhibition by its C-terminus (residues 139-145), which folds into a short alpha-helix that partially occludes the substrate-binding site. In absence of stress, the ribonuclease activity is inhibited by RNH1 in the cytoplasm. In response to stress, dissociates from RNH1 in the cytoplasm and associates with cytoplasmic ribosomes with vacant A-sites: ribosomes directly activate the tRNA ribonuclease activity of ANG by refolding the C-terminal alpha-helix. In response to stress, the angiogenic activity of ANG is inhibited by RNH1 in the nucleus. Its function is as follows. Secreted ribonuclease that can either promote or restrict cell proliferation of target cells, depending on the context. Endocytosed in target cells via its receptor PLXNB2 and translocates to the cytoplasm or nucleus. Under stress conditions, localizes to the cytoplasm and promotes the assembly of stress granules (SGs): specifically cleaves a subset of tRNAs within anticodon loops to produce tRNA-derived stress-induced fragments (tiRNAs), resulting in translation repression and inhibition of cell proliferation. tiRNas also prevent formation of apoptosome, thereby promoting cell survival. Preferentially cleaves RNAs between a pyrimidine and an adenosine residue, suggesting that it cleaves the anticodon loop of tRNA(Ala) (32-UUAGCAU-38) after positions 33 and 36. Cleaves a subset of tRNAs, including tRNA(Ala), tRNA(Glu), tRNA(Gly), tRNA(Lys), tRNA(Val), tRNA(His), tRNA(Asp) and tRNA(Sec). Under growth conditions and in differentiated cells, translocates to the nucleus and stimulates ribosomal RNA (rRNA) transcription, including that containing the initiation site sequences of 45S rRNA, thereby promoting cell growth and proliferation. Angiogenin induces vascularization of normal and malignant tissues via its ability to promote rRNA transcription. Involved in hematopoietic stem and progenitor cell (HSPC) growth and survival by promoting rRNA transcription in growth conditions and inhibiting translation in response to stress, respectively. Mediates the crosstalk between myeloid and intestinal epithelial cells to protect the intestinal epithelial barrier integrity: secreted by myeloid cells and promotes intestinal epithelial cells proliferation and survival. Also mediates osteoclast-endothelial cell crosstalk in growing bone: produced by osteoclasts and protects the neighboring vascular cells against senescence by promoting rRNA transcription. This chain is Angiogenin, found in Mus musculus (Mouse).